The following is a 308-amino-acid chain: Protoheme IX farnesyltransferase (308 aa).

The next 9 helical transmembrane spans lie at 31 to 51 (VGIVYSNLITTFTGMWLAFYF), 60 to 80 (LDIVLFTLAGSSLIIAGSCVI), 110 to 130 (ALWFGILLTALGFIMLLMTNL), 131 to 151 (TAAGVGFVGVFTYVFLYTMWS), 157 to 177 (VNTIIGSVSGAVPPLIGWTAV), 185 to 205 (AWVLFLIMFIWQIPHFLALAI), 232 to 252 (IIIWIACLMPLPFFLGGLGLP), 253 to 273 (IVILGTVLNIGWLVCGLVGYR), and 285 to 305 (FVYSLNYLTIFFVAMVVFTLF).

Belongs to the UbiA prenyltransferase family. Protoheme IX farnesyltransferase subfamily. As to quaternary structure, interacts with CtaA.

The protein localises to the cell membrane. It carries out the reaction heme b + (2E,6E)-farnesyl diphosphate + H2O = Fe(II)-heme o + diphosphate. It functions in the pathway porphyrin-containing compound metabolism; heme O biosynthesis; heme O from protoheme: step 1/1. Its function is as follows. Converts heme B (protoheme IX) to heme O by substitution of the vinyl group on carbon 2 of heme B porphyrin ring with a hydroxyethyl farnesyl side group. The polypeptide is Protoheme IX farnesyltransferase (Bacillus licheniformis (strain ATCC 14580 / DSM 13 / JCM 2505 / CCUG 7422 / NBRC 12200 / NCIMB 9375 / NCTC 10341 / NRRL NRS-1264 / Gibson 46)).